The chain runs to 121 residues: Protein PilH (121 aa).

The Response regulatory domain occupies 3-119 (RILIVDDSPT…TLLKTINAVL (117 aa)). A 4-aspartylphosphate modification is found at Asp-52.

Functionally, may be a part of a signal-transduction system that regulates twitching motility by controlling pilus function (extension and retraction). The polypeptide is Protein PilH (pilH) (Pseudomonas aeruginosa (strain ATCC 15692 / DSM 22644 / CIP 104116 / JCM 14847 / LMG 12228 / 1C / PRS 101 / PAO1)).